We begin with the raw amino-acid sequence, 132 residues long: ATP synthase epsilon chain, chloroplastic (132 aa).

The protein belongs to the ATPase epsilon chain family. As to quaternary structure, F-type ATPases have 2 components, CF(1) - the catalytic core - and CF(0) - the membrane proton channel. CF(1) has five subunits: alpha(3), beta(3), gamma(1), delta(1), epsilon(1). CF(0) has three main subunits: a, b and c.

It localises to the plastid. The protein localises to the chloroplast thylakoid membrane. Its function is as follows. Produces ATP from ADP in the presence of a proton gradient across the membrane. This Coffea arabica (Arabian coffee) protein is ATP synthase epsilon chain, chloroplastic.